The sequence spans 166 residues: Interferon gamma (166 aa).

An N-terminal signal peptide occupies residues 1–23 (MNYTTICLAFQLCVIFCSSGYYC). Gln-24 is subject to Pyrrolidone carboxylic acid. N-linked (GlcNAc...) asparagine glycans are attached at residues Asn-39, Asn-106, and Asn-107.

The protein belongs to the type II (or gamma) interferon family. In terms of assembly, homodimer. Interacts with IFNGR1 (via extracellular domain); this interaction promotes IFNGR1 dimerization.

The protein localises to the secreted. Type II interferon produced by immune cells such as T-cells and NK cells that plays crucial roles in antimicrobial, antiviral, and antitumor responses by activating effector immune cells and enhancing antigen presentation. Primarily signals through the JAK-STAT pathway after interaction with its receptor IFNGR1 to affect gene regulation. Upon IFNG binding, IFNGR1 intracellular domain opens out to allow association of downstream signaling components JAK2, JAK1 and STAT1, leading to STAT1 activation, nuclear translocation and transcription of IFNG-regulated genes. Many of the induced genes are transcription factors such as IRF1 that are able to further drive regulation of a next wave of transcription. Plays a role in class I antigen presentation pathway by inducing a replacement of catalytic proteasome subunits with immunoproteasome subunits. In turn, increases the quantity, quality, and repertoire of peptides for class I MHC loading. Increases the efficiency of peptide generation also by inducing the expression of activator PA28 that associates with the proteasome and alters its proteolytic cleavage preference. Up-regulates as well MHC II complexes on the cell surface by promoting expression of several key molecules such as cathepsins B/CTSB, H/CTSH, and L/CTSL. Participates in the regulation of hematopoietic stem cells during development and under homeostatic conditions by affecting their development, quiescence, and differentiation. In Mustela putorius furo (European domestic ferret), this protein is Interferon gamma (IFNG).